The primary structure comprises 269 residues: Cytochrome c oxidase subunit 3 (269 aa).

A run of 7 helical transmembrane segments spans residues 13–33 (PFHL…LLVL), 46–66 (NGHY…SFWF), 90–110 (GVIL…WAFF), 138–160 (PLLN…HSII), 167–187 (ALYG…FQGV), 207–227 (FGTG…LVAL), and 245–265 (AGIL…ISIY).

This sequence belongs to the cytochrome c oxidase subunit 3 family. In terms of assembly, component of the cytochrome c oxidase (complex IV, CIV), a multisubunit enzyme composed of a catalytic core of 3 subunits and several supernumerary subunits. The complex exists as a monomer or a dimer and forms supercomplexes (SCs) in the inner mitochondrial membrane with ubiquinol-cytochrome c oxidoreductase (cytochrome b-c1 complex, complex III, CIII).

It is found in the mitochondrion inner membrane. It catalyses the reaction 4 Fe(II)-[cytochrome c] + O2 + 8 H(+)(in) = 4 Fe(III)-[cytochrome c] + 2 H2O + 4 H(+)(out). Its function is as follows. Component of the cytochrome c oxidase, the last enzyme in the mitochondrial electron transport chain which drives oxidative phosphorylation. The respiratory chain contains 3 multisubunit complexes succinate dehydrogenase (complex II, CII), ubiquinol-cytochrome c oxidoreductase (cytochrome b-c1 complex, complex III, CIII) and cytochrome c oxidase (complex IV, CIV), that cooperate to transfer electrons derived from NADH and succinate to molecular oxygen, creating an electrochemical gradient over the inner membrane that drives transmembrane transport and the ATP synthase. Cytochrome c oxidase is the component of the respiratory chain that catalyzes the reduction of oxygen to water. Electrons originating from reduced cytochrome c in the intermembrane space (IMS) are transferred via the dinuclear copper A center (CU(A)) of subunit 2 and heme A of subunit 1 to the active site in subunit 1, a binuclear center (BNC) formed by heme A3 and copper B (CU(B)). The BNC reduces molecular oxygen to 2 water molecules using 4 electrons from cytochrome c in the IMS and 4 protons from the mitochondrial matrix. This chain is Cytochrome c oxidase subunit 3 (COX3), found in Pyricularia grisea (Crabgrass-specific blast fungus).